The chain runs to 309 residues: Uracil phosphoribosyltransferase homolog (309 aa).

Residues 1-41 (MATELQCPDSMPCHNQQVNSASTPSPEQLRPGDPILDHAGG) are disordered. Polar residues predominate over residues 13–26 (CHNQQVNSASTPSP). Position 25 is a phosphoserine (serine 25). Residues arginine 133, arginine 142, and 176–179 (EKGN) each bind GTP. Residue arginine 186 coordinates 5-phospho-alpha-D-ribose 1-diphosphate. Residues arginine 203 and arginine 232 each contribute to the GTP site. Residue 238–246 (YPILSTGNT) coordinates 5-phospho-alpha-D-ribose 1-diphosphate. 299-301 (THF) is a binding site for uracil.

The protein belongs to the UPRTase family.

The protein localises to the cytoplasm. Its subcellular location is the nucleus. This is Uracil phosphoribosyltransferase homolog (UPRT) from Macaca fascicularis (Crab-eating macaque).